Consider the following 488-residue polypeptide: 3-octaprenyl-4-hydroxybenzoate carboxy-lyase (488 aa).

Position 172 (Asn-172) interacts with Mn(2+). Residues 175–177, 189–191, and 194–195 contribute to the prenylated FMN site; these read IYR, RWL, and RG. Glu-238 contributes to the Mn(2+) binding site. Asp-287 acts as the Proton donor in catalysis.

This sequence belongs to the UbiD family. Homohexamer. Prenylated FMN serves as cofactor. Mn(2+) is required as a cofactor.

Its subcellular location is the cell membrane. It carries out the reaction a 4-hydroxy-3-(all-trans-polyprenyl)benzoate + H(+) = a 2-(all-trans-polyprenyl)phenol + CO2. It functions in the pathway cofactor biosynthesis; ubiquinone biosynthesis. Functionally, catalyzes the decarboxylation of 3-octaprenyl-4-hydroxy benzoate to 2-octaprenylphenol, an intermediate step in ubiquinone biosynthesis. The sequence is that of 3-octaprenyl-4-hydroxybenzoate carboxy-lyase from Pseudomonas fluorescens (strain Pf0-1).